Reading from the N-terminus, the 246-residue chain is Complement C1q tumor necrosis factor-related protein 3 (246 aa).

A signal peptide spans 1–22 (MLWRQLIYWQLLALFFLPFCLC). The Collagen-like domain maps to 51–113 (GYQGPPGPPG…KGEKGYPGIP (63 aa)). The disordered stretch occupies residues 53-110 (QGPPGPPGPPGIPGNHGNNGNNGATGHEGAKGEKGDKGDLGPRGERGQHGPKGEKGYP). Residues 55-64 (PPGPPGPPGI) are compositionally biased toward pro residues. Residues 65–74 (PGNHGNNGNN) show a composition bias toward low complexity. An N-linked (GlcNAc...) asparagine glycan is attached at N70. A compositionally biased stretch (basic and acidic residues) spans 80–107 (EGAKGEKGDKGDLGPRGERGQHGPKGEK). Residues 113–246 (PPELQIAFMA…FAGFLLFETK (134 aa)) form the C1q domain.

In terms of processing, glycosylated on Asn-70. In terms of tissue distribution, expressed in colon and small intestine.

The protein localises to the secreted. The sequence is that of Complement C1q tumor necrosis factor-related protein 3 (C1QTNF3) from Homo sapiens (Human).